Consider the following 263-residue polypeptide: Elongin-A (263 aa).

2 disordered regions span residues Lys-112 to Lys-147 and Ser-170 to Ile-263. Composition is skewed to polar residues over residues Arg-186–Pro-206 and Ser-214–Gln-229. The span at Pro-230–Pro-245 shows a compositional bias: low complexity. A compositionally biased stretch (polar residues) spans Ser-253–Ile-263.

Belongs to the ELA1 family. In terms of assembly, heterodimer with elc1. Component of a CRL3 E3 ubiquitin ligase complex consisting of a cullin, the linker protein elc1, the substrate receptor pof4/ela1, and the RING protein rbx1. Interacts with skp1.

As part of the CRL3 E3 ubiquitin ligase complex; polyubiquitylates monoubiquitylated RNA polymerase II subunit rpb1 to trigger its proteolysis; plays a role in global genomic repair. This chain is Elongin-A (pof4), found in Schizosaccharomyces pombe (strain 972 / ATCC 24843) (Fission yeast).